The following is a 245-amino-acid chain: Polyhedrin (245 aa).

This sequence belongs to the polyhedrin family.

In terms of biological role, major component of the virus occlusion bodies, which are large proteinaceous structures (polyhedra), that protect the virus from the outside environment for extended periods until they are ingested by insect larvae. The sequence is that of Polyhedrin (PH) from Orgyia pseudotsugata multicapsid polyhedrosis virus (OpMNPV).